Reading from the N-terminus, the 223-residue chain is Putative UPF0607 protein LOC392364 (223 aa).

Basic and acidic residues predominate over residues 110–138 (KMEVRAEEPKEATEVKDQVETQEQEDNKR). The interval 110–223 (KMEVRAEEPK…GRTPPARQHG (114 aa)) is disordered. 2 stretches are compositionally biased toward polar residues: residues 145 to 163 (EAAS…TSPR) and 174 to 186 (QLKS…QTDK).

This sequence belongs to the UPF0607 family.

This chain is Putative UPF0607 protein LOC392364, found in Homo sapiens (Human).